A 379-amino-acid polypeptide reads, in one-letter code: Succinyl-diaminopimelate desuccinylase (379 aa).

His70 contributes to the Zn(2+) binding site. Asp72 is a catalytic residue. Residue Asp103 coordinates Zn(2+). Glu137 (proton acceptor) is an active-site residue. Residues Glu138, Glu166, and His352 each contribute to the Zn(2+) site.

The protein belongs to the peptidase M20A family. DapE subfamily. As to quaternary structure, homodimer. Requires Zn(2+) as cofactor. Co(2+) serves as cofactor.

The enzyme catalyses N-succinyl-(2S,6S)-2,6-diaminopimelate + H2O = (2S,6S)-2,6-diaminopimelate + succinate. The protein operates within amino-acid biosynthesis; L-lysine biosynthesis via DAP pathway; LL-2,6-diaminopimelate from (S)-tetrahydrodipicolinate (succinylase route): step 3/3. Its function is as follows. Catalyzes the hydrolysis of N-succinyl-L,L-diaminopimelic acid (SDAP), forming succinate and LL-2,6-diaminopimelate (DAP), an intermediate involved in the bacterial biosynthesis of lysine and meso-diaminopimelic acid, an essential component of bacterial cell walls. The chain is Succinyl-diaminopimelate desuccinylase from Burkholderia ambifaria (strain MC40-6).